The following is a 445-amino-acid chain: Probable protein phosphatase 2C 14 (445 aa).

In terms of domain architecture, PPM-type phosphatase spans 120–440 (GFGVVSRNGK…DDITVVIIDL (321 aa)). Positions 156, 157, and 318 each coordinate Mn(2+). The tract at residues 384–404 (NSENESPSLNREIGSSPSKSP) is disordered. Polar residues predominate over residues 390–404 (PSLNREIGSSPSKSP). Asp431 contributes to the Mn(2+) binding site.

It belongs to the PP2C family. Mg(2+) serves as cofactor. Requires Mn(2+) as cofactor.

It catalyses the reaction O-phospho-L-seryl-[protein] + H2O = L-seryl-[protein] + phosphate. It carries out the reaction O-phospho-L-threonyl-[protein] + H2O = L-threonyl-[protein] + phosphate. The polypeptide is Probable protein phosphatase 2C 14 (Arabidopsis thaliana (Mouse-ear cress)).